A 603-amino-acid polypeptide reads, in one-letter code: Zinc finger protein 415 (603 aa).

A C2H2-type 1; degenerate zinc finger spans residues 264–286 (YRYIECDKALNHGSHMTVRQVSH). 11 consecutive C2H2-type zinc fingers follow at residues 292–314 (YKCDLCGKVFSQKSNLARHWRVH), 320–342 (YKCNECDRSFSRNSCLALHRRVH), 348–370 (YKCYECDKVFSRNSCLALHQKTH), 376–398 (YTCKECGKAFSVRSTLTNHQVIH), 404–426 (YKCNECGKVFSQTSSLATHQRIH), 432–454 (YKCNECGKVFSQTSSLARHWRIH), 460–482 (YKCNECGKVFSYNSHLASHRRVH), 488–510 (YKCNECGKAFSVHSNLTTHQVIH), 516–538 (YKCNQCGKGFSVHSSLTTHQVIH), 544–566 (YKCNECGKSFSVRPNLTRHQIIH), and 572–594 (YKCSDCGKSFSVRPNLFRHQIIH).

As to expression, expressed in all tissues examined. Isoforms are differentially expressed. Isoform 3 and isoform 5 were highly expressed, isoform 4 moderately expressed, isoform 2 lower expression, the lowest expression level was seem with isoform 1.

The protein localises to the nucleus. The protein resides in the cytoplasm. Its function is as follows. Involved in transcriptional regulation. Transcriptional activity differed among the various isoforms. All isoforms except isoform 3 seem to suppresses the transcriptional activities of AP-1 and p53/TP53. This Homo sapiens (Human) protein is Zinc finger protein 415 (ZNF415).